Reading from the N-terminus, the 291-residue chain is Cell division protein ZipA (291 aa).

Topologically, residues 1-5 (MQELR) are periplasmic. A helical transmembrane segment spans residues 6–26 (FVLIIVGALAIAALLFHGLWT). At 27-291 (SKKEGKSKFG…QEFKVRAAQA (265 aa)) the chain is on the cytoplasmic side. Basic and acidic residues predominate over residues 29 to 51 (KEGKSKFGDKPLRKMKVESDDPP). Disordered regions lie at residues 29-61 (KEGK…EDDF) and 92-119 (ELDE…VQPQ).

This sequence belongs to the ZipA family. In terms of assembly, interacts with FtsZ via their C-terminal domains.

The protein resides in the cell inner membrane. Functionally, essential cell division protein that stabilizes the FtsZ protofilaments by cross-linking them and that serves as a cytoplasmic membrane anchor for the Z ring. Also required for the recruitment to the septal ring of downstream cell division proteins. This chain is Cell division protein ZipA, found in Vibrio cholerae serotype O1 (strain ATCC 39541 / Classical Ogawa 395 / O395).